A 504-amino-acid chain; its full sequence is Cytochrome P450 4A25 (504 aa).

The next 2 membrane-spanning stretches (helical) occupy residues 6 to 26 (LASASGLLQVASLLGLLLLLL) and 110 to 130 (APVLYRLLIPWIGCGLLLLNG). A heme-binding site is contributed by C451.

It belongs to the cytochrome P450 family. It depends on heme as a cofactor.

Its subcellular location is the endoplasmic reticulum membrane. The enzyme catalyses an omega-methyl-long-chain fatty acid + reduced [NADPH--hemoprotein reductase] + O2 = an omega-hydroxy-long-chain fatty acid + oxidized [NADPH--hemoprotein reductase] + H2O + H(+). Its function is as follows. Catalyzes the omega- and (omega-1)-hydroxylation of various fatty acids such as laurate and palmitate. Has no activity toward taurochenodeoxycholic acid. This chain is Cytochrome P450 4A25 (CYP4A25), found in Sus scrofa (Pig).